Consider the following 1146-residue polypeptide: Ankyrin repeat and fibronectin type-III domain-containing protein 1 (1146 aa).

ANK repeat units lie at residues 133-162 (QGNE…PEEL) and 170-199 (EGLT…RESP). In terms of domain architecture, Fibronectin type-III spans 270 to 366 (MPTNVCLMVT…TTTPACASPS (97 aa)). The tract at residues 607–614 (GLYLGYLK) is highly conserved peptide sequence. Disordered regions lie at residues 855 to 887 (NSTS…QPCS), 945 to 964 (VKTP…NPDH), and 1106 to 1146 (PWAS…SSML). Over residues 1131-1146 (EGPTASPMSEILSSML) the composition is skewed to polar residues.

May play a role in neuronal function. This is Ankyrin repeat and fibronectin type-III domain-containing protein 1 from Homo sapiens (Human).